The following is a 675-amino-acid chain: DNA ligase (675 aa).

NAD(+)-binding positions include 32–36, 81–82, and glutamate 113; these read DAEYD and SL. Lysine 115 (N6-AMP-lysine intermediate) is an active-site residue. Residues arginine 136, glutamate 173, lysine 291, and lysine 315 each coordinate NAD(+). Residues cysteine 409, cysteine 412, cysteine 427, and cysteine 433 each contribute to the Zn(2+) site. The 81-residue stretch at 595–675 folds into the BRCT domain; that stretch reads SEKTYFFNKK…ELNSLIRIKE (81 aa).

The protein belongs to the NAD-dependent DNA ligase family. LigA subfamily. It depends on Mg(2+) as a cofactor. The cofactor is Mn(2+).

The catalysed reaction is NAD(+) + (deoxyribonucleotide)n-3'-hydroxyl + 5'-phospho-(deoxyribonucleotide)m = (deoxyribonucleotide)n+m + AMP + beta-nicotinamide D-nucleotide.. Its function is as follows. DNA ligase that catalyzes the formation of phosphodiester linkages between 5'-phosphoryl and 3'-hydroxyl groups in double-stranded DNA using NAD as a coenzyme and as the energy source for the reaction. It is essential for DNA replication and repair of damaged DNA. This chain is DNA ligase, found in Buchnera aphidicola subsp. Acyrthosiphon pisum (strain 5A).